Reading from the N-terminus, the 316-residue chain is Acetaldehyde dehydrogenase 1 (316 aa).

12-15 (SGNI) lines the NAD(+) pocket. Cysteine 132 functions as the Acyl-thioester intermediate in the catalytic mechanism. Residues 163 to 171 (SAGPGTRAN) and asparagine 291 contribute to the NAD(+) site.

It belongs to the acetaldehyde dehydrogenase family.

It carries out the reaction acetaldehyde + NAD(+) + CoA = acetyl-CoA + NADH + H(+). The protein is Acetaldehyde dehydrogenase 1 of Pseudomonas putida (strain ATCC 700007 / DSM 6899 / JCM 31910 / BCRC 17059 / LMG 24140 / F1).